The primary structure comprises 113 residues: Ribonuclease P protein component (113 aa).

It belongs to the RnpA family. Consists of a catalytic RNA component (M1 or rnpB) and a protein subunit.

The catalysed reaction is Endonucleolytic cleavage of RNA, removing 5'-extranucleotides from tRNA precursor.. RNaseP catalyzes the removal of the 5'-leader sequence from pre-tRNA to produce the mature 5'-terminus. It can also cleave other RNA substrates such as 4.5S RNA. The protein component plays an auxiliary but essential role in vivo by binding to the 5'-leader sequence and broadening the substrate specificity of the ribozyme. The chain is Ribonuclease P protein component from Desulforamulus reducens (strain ATCC BAA-1160 / DSM 100696 / MI-1) (Desulfotomaculum reducens).